Consider the following 1452-residue polypeptide: Pleiotropic drug resistance protein 1 (1452 aa).

The region spanning 152 to 425 is the ABC transporter 1 domain; the sequence is LNYLHILPNR…FEYMGFICPE (274 aa). 185 to 192 is a binding site for ATP; sequence GPPSSGKT. Residues 504-716 form the ABC transmembrane type-2 1 domain; that stretch reads LLKACTAREY…AQNAIAVNEF (213 aa). 7 helical membrane passes run 521-541, 554-574, 609-629, 640-660, 664-684, 694-714, and 753-773; these read FVYI…MTLF, GAVF…NGFS, IPIT…VIGF, LLLL…MGAL, IIVA…MGGF, WWIW…IAVN, and IGAG…AVAL. Residues 808–830 form a disordered region; sequence LGKSSSEKGNDVRRSASSRSMSS. Residues 812–821 show a composition bias toward basic and acidic residues; that stretch reads SSEKGNDVRR. Positions 855-1107 constitute an ABC transporter 2 domain; the sequence is ITFDDIRYAV…HLIKYFEGID (253 aa). An ATP-binding site is contributed by 900–907; that stretch reads GVSGAGKT. The ABC transmembrane type-2 2 domain maps to 1180–1394; that stretch reads TQCMACFWKQ…TLYGLIASQF (215 aa). Transmembrane regions (helical) follow at residues 1199 to 1219, 1239 to 1259, 1287 to 1307, 1314 to 1334, 1344 to 1364, 1375 to 1395, and 1421 to 1441; these read YTAV…TIFW, YIAV…VIAI, LPYL…MIGF, FFWY…YGMM, IAAI…GFIV, WYYY…SQFG, and FVGY…FIFA.

Belongs to the ABC transporter superfamily. ABCG family. PDR (TC 3.A.1.205) subfamily. As to expression, expressed in root hypodermal passage cells. Expressed in stem tissues, particularly the vasculature and nodes adjacent to leaf axils.

It is found in the cell membrane. Cellular strigolactone (SL) transporter required for the exudation of SL from the root to the soil. The presence of SL in the vicinity of the roots is required for development of symbiotic interactions with arbuscular mycorrhizal fungi (AMF). Transports SL in the above ground tissues and is required for the control of shoot branching. SL regulates plant shoot architecture by inhibiting the outgrowth of axillary buds. Involved in the regulation of shootward and outward directional strigolactone transport in roots. Due to its polar localization in root cells, mediates directional shootward strigolactone transport, as well as localized outward directional transport for exudation to the soil. The polypeptide is Pleiotropic drug resistance protein 1 (Petunia axillaris (Large white petunia)).